The primary structure comprises 222 residues: Charged multivesicular body protein 2a (222 aa).

Position 1 is an N-acetylmethionine (Met1). Positions 12–53 form a coiled coil; the sequence is EELLRQNQRALNRAMRELDRERQKLETQEKKIIADIKKMAKQ. Residues 56–222 are interaction with VPS4B; that stretch reads MDAVRIMAKD…EERLKNLRRD (167 aa). Residue Ser184 is modified to Phosphoserine. Phosphothreonine is present on Thr185. Residues Ser188, Ser190, and Ser203 each carry the phosphoserine modification. A coiled-coil region spans residues 195–222; sequence GKKAEAAASALADADADLEERLKNLRRD. Residues 210–220 carry the MIT-interacting motif motif; it reads ADLEERLKNLR. An interaction with VTA1 region spans residues 217-222; the sequence is KNLRRD.

The protein belongs to the SNF7 family. As to quaternary structure, probable core component of the endosomal sorting required for transport complex III (ESCRT-III). ESCRT-III components are thought to multimerize to form a flat lattice on the perimeter membrane of the endosome. Several assembly forms of ESCRT-III may exist that interact and act sequentially. In vitro, heteromerizes with CHMP3 (but not CHMP4) to form helical tubular structures that expose membrane-interacting sites on the outside whereas VPS4B can associate on the inside of the tubule. Interacts with CHMP1B, CHMP2B, CHMP3, CHMP4A, CHMP4B, CHMP4C and CHMP5. Interacts with VPS4A; the interaction is direct. Interacts with VPS4B; the interaction is direct. Interacts with MITD1. Interacts with VTA1; the interaction probably involves the open conformation of CHMP2A. ISGylated in a CHMP5-dependent manner. Isgylation weakens and inhibits its interactions with VPS4A and VTA1 respectively.

It is found in the late endosome membrane. Its subcellular location is the nucleus envelope. Functionally, probable core component of the endosomal sorting required for transport complex III (ESCRT-III) which is involved in multivesicular bodies (MVBs) formation and sorting of endosomal cargo proteins into MVBs. MVBs contain intraluminal vesicles (ILVs) that are generated by invagination and scission from the limiting membrane of the endosome and mostly are delivered to lysosomes enabling degradation of membrane proteins, such as stimulated growth factor receptors, lysosomal enzymes and lipids. The MVB pathway appears to require the sequential function of ESCRT-O, -I,-II and -III complexes. ESCRT-III proteins mostly dissociate from the invaginating membrane before the ILV is released. The ESCRT machinery also functions in topologically equivalent membrane fission events, such as the terminal stages of cytokinesis. Together with SPAST, the ESCRT-III complex promotes nuclear envelope sealing and mitotic spindle disassembly during late anaphase. Recruited to the reforming nuclear envelope (NE) during anaphase by LEMD2. ESCRT-III proteins are believed to mediate the necessary vesicle extrusion and/or membrane fission activities, possibly in conjunction with the AAA ATPase VPS4. Its function is as follows. (Microbial infection) The ESCRT machinery functions in topologically equivalent membrane fission events, such as the budding of enveloped viruses (HIV-1 and other lentiviruses). Involved in HIV-1 p6- and p9-dependent virus release. This is Charged multivesicular body protein 2a (CHMP2A) from Homo sapiens (Human).